The following is a 172-amino-acid chain: S-ribosylhomocysteine lyase (172 aa).

Residues His-54, His-58, and Cys-128 each contribute to the Fe cation site.

This sequence belongs to the LuxS family. In terms of assembly, homodimer. It depends on Fe cation as a cofactor.

The catalysed reaction is S-(5-deoxy-D-ribos-5-yl)-L-homocysteine = (S)-4,5-dihydroxypentane-2,3-dione + L-homocysteine. Its function is as follows. Involved in the synthesis of autoinducer 2 (AI-2) which is secreted by bacteria and is used to communicate both the cell density and the metabolic potential of the environment. The regulation of gene expression in response to changes in cell density is called quorum sensing. Catalyzes the transformation of S-ribosylhomocysteine (RHC) to homocysteine (HC) and 4,5-dihydroxy-2,3-pentadione (DPD). The sequence is that of S-ribosylhomocysteine lyase from Photobacterium profundum (strain SS9).